A 453-amino-acid polypeptide reads, in one-letter code: UDP-N-acetylmuramate--L-alanine ligase (453 aa).

112-118 (GTHGKTT) is a binding site for ATP.

It belongs to the MurCDEF family.

The protein localises to the cytoplasm. The enzyme catalyses UDP-N-acetyl-alpha-D-muramate + L-alanine + ATP = UDP-N-acetyl-alpha-D-muramoyl-L-alanine + ADP + phosphate + H(+). Its pathway is cell wall biogenesis; peptidoglycan biosynthesis. Cell wall formation. The polypeptide is UDP-N-acetylmuramate--L-alanine ligase (Bdellovibrio bacteriovorus (strain ATCC 15356 / DSM 50701 / NCIMB 9529 / HD100)).